Consider the following 119-residue polypeptide: Large ribosomal subunit protein uL18 (119 aa).

It belongs to the universal ribosomal protein uL18 family. Part of the 50S ribosomal subunit; part of the 5S rRNA/L5/L18/L25 subcomplex. Contacts the 5S and 23S rRNAs.

This is one of the proteins that bind and probably mediate the attachment of the 5S RNA into the large ribosomal subunit, where it forms part of the central protuberance. This chain is Large ribosomal subunit protein uL18, found in Chelativorans sp. (strain BNC1).